A 224-amino-acid chain; its full sequence is TM2 domain-containing protein amaretto (224 aa).

Residues 1–18 (MRIFYGLLAFLVARQHDA) form the signal peptide. At 19-154 (QAIQARSDKE…FLRAGVPCVR (136 aa)) the chain is on the extracellular side. 2 N-linked (GlcNAc...) asparagine glycosylation sites follow: Asn102 and Asn142. The helical transmembrane segment at 155–175 (YTDHYFVTTLIYSMLLGFLGM) threads the bilayer. Residues 157–205 (DHYFVTTLIYSMLLGFLGMDRFCLGQTGTAVGKLLTMGGVGVWWIIDVI) enclose the TM2 domain. Residues 176–189 (DRFCLGQTGTAVGK) lie on the Cytoplasmic side of the membrane. Residues 190–210 (LLTMGGVGVWWIIDVILLITN) traverse the membrane as a helical segment. At 211–224 (NLLPEDGSNWNPYV) the chain is on the extracellular side.

The protein belongs to the TM2 family.

The protein localises to the membrane. Functionally, positive regulator of Notch signaling. Maternal neurogenic factor involved in Notch signaling-dependent neuroectodermal specification during early embryogenesis. Functions cooperatively with amx/TM2D3 and bisc/TM2D1. This chain is TM2 domain-containing protein amaretto, found in Drosophila melanogaster (Fruit fly).